We begin with the raw amino-acid sequence, 238 residues long: Large ribosomal subunit protein uL1 (238 aa).

The protein belongs to the universal ribosomal protein uL1 family. As to quaternary structure, part of the 50S ribosomal subunit.

In terms of biological role, binds directly to 23S rRNA. The L1 stalk is quite mobile in the ribosome, and is involved in E site tRNA release. Functionally, protein L1 is also a translational repressor protein, it controls the translation of the L11 operon by binding to its mRNA. The sequence is that of Large ribosomal subunit protein uL1 from Rippkaea orientalis (strain PCC 8801 / RF-1) (Cyanothece sp. (strain PCC 8801)).